We begin with the raw amino-acid sequence, 758 residues long: 1-phosphatidylinositol 4,5-bisphosphate phosphodiesterase delta-4 (758 aa).

The region spanning 16–124 is the PH domain; sequence QLMQAGSPMR…WIQGLEKLIE (109 aa). The interval 26 to 53 is substrate binding; it reads KVKSRSWKKQRYFKLQEDCMTIWYNSKK. EF-hand domains lie at 134 to 169, 170 to 205, and 206 to 237; these read LMDQ…MNVD, MSEH…LTQR, and DEVL…GQLE. Ca(2+) contacts are provided by Asp147, Asn149, Asp151, Arg153, Glu158, Asp183, Ser185, Ser187, Thr189, and Glu194. The GBA motif lies at 213 to 243; sequence QDFSKDGKKLTLLEFVDFLQQGQLEEENTEE. The PI-PLC X-box domain maps to 290–435; sequence QDMMQPLCHY…LRGKILLKGK (146 aa). The active site involves His305. Positions 306, 335, and 337 each coordinate Ca(2+). Residue His350 is part of the active site. Residue Glu384 coordinates Ca(2+). Substrate-binding residues include Lys433 and Lys435. The segment covering 446–468 has biased composition (acidic residues); the sequence is EQPDDSLGEVSDEEENIEVEEER. The interval 446-479 is disordered; the sequence is EQPDDSLGEVSDEEENIEVEEERNEDKKRAKKSK. The 117-residue stretch at 486–602 folds into the PI-PLC Y-box domain; that stretch reads LSDCVIYCKS…GYVLKPSFMR (117 aa). Positions 515 and 542 each coordinate substrate. One can recognise a C2 domain in the interval 602–731; that stretch reads RHVETTFNPD…SGYRHIHLLS (130 aa). Ile645, Asp647, Asn671, Asp700, Tyr701, and Asp702 together coordinate Ca(2+). The PDZ-binding motif lies at 726 to 729; it reads HIHL.

Ca(2+) serves as cofactor.

It localises to the membrane. It is found in the nucleus. Its subcellular location is the cytoplasm. The protein localises to the endoplasmic reticulum. The catalysed reaction is a 1,2-diacyl-sn-glycero-3-phospho-(1D-myo-inositol-4,5-bisphosphate) + H2O = 1D-myo-inositol 1,4,5-trisphosphate + a 1,2-diacyl-sn-glycerol + H(+). It catalyses the reaction a 1,2-diacyl-sn-glycero-3-phospho-(1D-myo-inositol) + H2O = 1D-myo-inositol 1-phosphate + a 1,2-diacyl-sn-glycerol + H(+). In terms of biological role, hydrolyzes the phosphatidylinositol 4,5-bisphosphate (PIP2) to generate 2 second messenger molecules diacylglycerol (DAG) and inositol 1,4,5-trisphosphate (IP3). DAG mediates the activation of protein kinase C (PKC), while IP3 releases Ca(2+) from intracellular stores. The polypeptide is 1-phosphatidylinositol 4,5-bisphosphate phosphodiesterase delta-4 (plcd4) (Xenopus laevis (African clawed frog)).